Consider the following 93-residue polypeptide: uncharacterized protein (93 aa).

A signal peptide spans 1 to 22; the sequence is MSIPNLSSVTQLLSIATGLVST. Asn-5 carries N-linked (GlcNAc...) asparagine; by host glycosylation.

This is an uncharacterized protein from Invertebrate iridescent virus 6 (IIV-6).